A 340-amino-acid chain; its full sequence is Eukaryotic translation initiation factor 3 subunit I (340 aa).

WD repeat units lie at residues 8-47, 50-91, 150-189, 194-233, and 291-330; these read GHER…RLGT, GHQG…KVWD, CTES…QLEN, EFDH…ILKT, and GHFG…FDFM.

The protein belongs to the eIF-3 subunit I family. Component of the eukaryotic translation initiation factor 3 (eIF-3) complex.

The protein localises to the cytoplasm. Its function is as follows. Component of the eukaryotic translation initiation factor 3 (eIF-3) complex, which is involved in protein synthesis of a specialized repertoire of mRNAs and, together with other initiation factors, stimulates binding of mRNA and methionyl-tRNAi to the 40S ribosome. The eIF-3 complex specifically targets and initiates translation of a subset of mRNAs involved in cell proliferation. This chain is Eukaryotic translation initiation factor 3 subunit I (tif34), found in Neosartorya fischeri (strain ATCC 1020 / DSM 3700 / CBS 544.65 / FGSC A1164 / JCM 1740 / NRRL 181 / WB 181) (Aspergillus fischerianus).